A 282-amino-acid polypeptide reads, in one-letter code: 4-diphosphocytidyl-2-C-methyl-D-erythritol kinase (282 aa).

Residue Lys-12 is part of the active site. 95–105 (PMGGGIGGGSS) is an ATP binding site. Asp-137 is an active-site residue.

The protein belongs to the GHMP kinase family. IspE subfamily.

The enzyme catalyses 4-CDP-2-C-methyl-D-erythritol + ATP = 4-CDP-2-C-methyl-D-erythritol 2-phosphate + ADP + H(+). The protein operates within isoprenoid biosynthesis; isopentenyl diphosphate biosynthesis via DXP pathway; isopentenyl diphosphate from 1-deoxy-D-xylulose 5-phosphate: step 3/6. Its function is as follows. Catalyzes the phosphorylation of the position 2 hydroxy group of 4-diphosphocytidyl-2C-methyl-D-erythritol. The polypeptide is 4-diphosphocytidyl-2-C-methyl-D-erythritol kinase (Pseudomonas aeruginosa (strain ATCC 15692 / DSM 22644 / CIP 104116 / JCM 14847 / LMG 12228 / 1C / PRS 101 / PAO1)).